Consider the following 333-residue polypeptide: Ornithine carbamoyltransferase (333 aa).

Carbamoyl phosphate contacts are provided by residues 56 to 59 (STRT), glutamine 83, arginine 107, and 134 to 137 (HPTQ). Residues asparagine 167, aspartate 231, and 235–236 (SM) contribute to the L-ornithine site. Carbamoyl phosphate is bound by residues 273-274 (CL) and arginine 318.

It belongs to the aspartate/ornithine carbamoyltransferase superfamily. OTCase family.

The protein resides in the cytoplasm. The catalysed reaction is carbamoyl phosphate + L-ornithine = L-citrulline + phosphate + H(+). The protein operates within amino-acid biosynthesis; L-arginine biosynthesis; L-arginine from L-ornithine and carbamoyl phosphate: step 1/3. Its function is as follows. Has vitronectin and fibronectin-binding activity. Reversibly catalyzes the transfer of the carbamoyl group from carbamoyl phosphate (CP) to the N(epsilon) atom of ornithine (ORN) to produce L-citrulline. In Staphylococcus epidermidis (strain ATCC 12228 / FDA PCI 1200), this protein is Ornithine carbamoyltransferase (argF).